The sequence spans 109 residues: Putative transporter-like protein YIL171W (109 aa).

Over residues 1 to 22 (MSGVNNTSANDLSTTESNSNSA) the composition is skewed to polar residues. The interval 1–40 (MSGVNNTSANDLSTTESNSNSAVGAPSVKTEHGDSKDSLN) is disordered. The Cytoplasmic segment spans residues 1-56 (MSGVNNTSANDLSTTESNSNSAVGAPSVKTEHGDSKDSLNLDATEAPIDLPQKPLS). Over residues 29-39 (KTEHGDSKDSL) the composition is skewed to basic and acidic residues. Residues 57–77 (AYTTVAILCLMIAFGGFIFGW) form a helical membrane-spanning segment. The Extracellular portion of the chain corresponds to 78-109 (DTGTISGFVNLSDFIRRFGQKKTTRGLTTYRK). Residue Asn-87 is glycosylated (N-linked (GlcNAc...) asparagine).

This sequence belongs to the major facilitator superfamily. Sugar transporter (TC 2.A.1.1) family.

It localises to the cell membrane. Its function is as follows. Probable glucose transporter. In Saccharomyces cerevisiae (strain ATCC 204508 / S288c) (Baker's yeast), this protein is Putative transporter-like protein YIL171W.